Consider the following 66-residue polypeptide: Cytochrome b-c1 complex subunit 9, mitochondrial (66 aa).

Topologically, residues 2-17 are mitochondrial matrix; sequence SFSSLYKTFFKRNAVF. The helical transmembrane segment at 18 to 43 threads the bilayer; that stretch reads VGTIFAGAFVFQTVFDTAITSWYENH. At 44-66 the chain is on the mitochondrial intermembrane side; sequence NKGKLWKDVKARIAAGDGDDDDE.

This sequence belongs to the UQCR10/QCR9 family. As to quaternary structure, component of the ubiquinol-cytochrome c oxidoreductase (cytochrome b-c1 complex, complex III, CIII), a multisubunit enzyme composed of 10 subunits. The complex is composed of 3 respiratory subunits cytochrome b (COB), cytochrome c1 (CYT1) and Rieske protein (RIP1), 2 core protein subunits COR1 and QCR2, and 5 low-molecular weight protein subunits QCR6, QCR7, QCR8, QCR9 and QCR10. The complex exists as an obligatory dimer and forms supercomplexes (SCs) in the inner mitochondrial membrane with a monomer or a dimer of cytochrome c oxidase (complex IV, CIV), resulting in 2 different assemblies (supercomplexes III(2)IV and III(2)IV(2)). Interacts with the transmembrane segment of RIP1.

The protein resides in the mitochondrion inner membrane. Functionally, component of the ubiquinol-cytochrome c oxidoreductase, a multisubunit transmembrane complex that is part of the mitochondrial electron transport chain which drives oxidative phosphorylation. The respiratory chain contains 3 multisubunit complexes succinate dehydrogenase (complex II, CII), ubiquinol-cytochrome c oxidoreductase (cytochrome b-c1 complex, complex III, CIII) and cytochrome c oxidase (complex IV, CIV), that cooperate to transfer electrons derived from NADH and succinate to molecular oxygen, creating an electrochemical gradient over the inner membrane that drives transmembrane transport and the ATP synthase. The cytochrome b-c1 complex catalyzes electron transfer from ubiquinol to cytochrome c, linking this redox reaction to translocation of protons across the mitochondrial inner membrane, with protons being carried across the membrane as hydrogens on the quinol. In the process called Q cycle, 2 protons are consumed from the matrix, 4 protons are released into the intermembrane space and 2 electrons are passed to cytochrome c. The chain is Cytochrome b-c1 complex subunit 9, mitochondrial (QCR9) from Saccharomyces cerevisiae (strain ATCC 204508 / S288c) (Baker's yeast).